The primary structure comprises 244 residues: tRNA pseudouridine synthase A (244 aa).

Asp-52 functions as the Nucleophile in the catalytic mechanism. Residue Tyr-110 coordinates substrate.

The protein belongs to the tRNA pseudouridine synthase TruA family. Homodimer.

The enzyme catalyses uridine(38/39/40) in tRNA = pseudouridine(38/39/40) in tRNA. Functionally, formation of pseudouridine at positions 38, 39 and 40 in the anticodon stem and loop of transfer RNAs. This chain is tRNA pseudouridine synthase A, found in Finegoldia magna (strain ATCC 29328 / DSM 20472 / WAL 2508) (Peptostreptococcus magnus).